The primary structure comprises 338 residues: Ketol-acid reductoisomerase (NADP(+)) (338 aa).

The 181-residue stretch at 1–181 folds into the KARI N-terminal Rossmann domain; sequence MKVYYDKDAD…GGTKGGVIET (181 aa). Residues 24–27, Arg-47, and Ser-52 contribute to the NADP(+) site; that span reads YGSQ. His-107 is an active-site residue. Gly-133 provides a ligand contact to NADP(+). In terms of domain architecture, KARI C-terminal knotted spans 182 to 327; the sequence is NFKEETETDL…GQLRDMMPWI (146 aa). Mg(2+)-binding residues include Asp-190, Glu-194, Glu-226, and Glu-230. Ser-251 lines the substrate pocket.

It belongs to the ketol-acid reductoisomerase family. Mg(2+) serves as cofactor.

It carries out the reaction (2R)-2,3-dihydroxy-3-methylbutanoate + NADP(+) = (2S)-2-acetolactate + NADPH + H(+). It catalyses the reaction (2R,3R)-2,3-dihydroxy-3-methylpentanoate + NADP(+) = (S)-2-ethyl-2-hydroxy-3-oxobutanoate + NADPH + H(+). The protein operates within amino-acid biosynthesis; L-isoleucine biosynthesis; L-isoleucine from 2-oxobutanoate: step 2/4. Its pathway is amino-acid biosynthesis; L-valine biosynthesis; L-valine from pyruvate: step 2/4. In terms of biological role, involved in the biosynthesis of branched-chain amino acids (BCAA). Catalyzes an alkyl-migration followed by a ketol-acid reduction of (S)-2-acetolactate (S2AL) to yield (R)-2,3-dihydroxy-isovalerate. In the isomerase reaction, S2AL is rearranged via a Mg-dependent methyl migration to produce 3-hydroxy-3-methyl-2-ketobutyrate (HMKB). In the reductase reaction, this 2-ketoacid undergoes a metal-dependent reduction by NADPH to yield (R)-2,3-dihydroxy-isovalerate. The protein is Ketol-acid reductoisomerase (NADP(+)) of Azoarcus sp. (strain BH72).